Consider the following 167-residue polypeptide: RNA pyrophosphohydrolase (167 aa).

Residues 8 to 158 form the Nudix hydrolase domain; the sequence is PYRRNVGAML…KRDIYRTLVR (151 aa). The short motif at 49–70 is the Nudix box element; the sequence is GGIDADEDPEEAVLRELREEIG.

It belongs to the Nudix hydrolase family. RppH subfamily. Requires a divalent metal cation as cofactor.

In terms of biological role, accelerates the degradation of transcripts by removing pyrophosphate from the 5'-end of triphosphorylated RNA, leading to a more labile monophosphorylated state that can stimulate subsequent ribonuclease cleavage. This is RNA pyrophosphohydrolase from Gluconacetobacter diazotrophicus (strain ATCC 49037 / DSM 5601 / CCUG 37298 / CIP 103539 / LMG 7603 / PAl5).